The sequence spans 356 residues: Ubiquitin-conjugating enzyme E2 Z (356 aa).

The segment covering 1–16 has biased composition (low complexity); that stretch reads MAESPTEEAATATAGA. The tract at residues 1–22 is disordered; that stretch reads MAESPTEEAATATAGAGAAGPG. The UBC core domain maps to 101 to 255; sequence QCLLRIKRDI…IRHETIRVAV (155 aa). Cys190 functions as the Glycyl thioester intermediate in the catalytic mechanism. A disordered region spans residues 334–356; the sequence is NAEMDSDSSSSGTETDLHGSLRV. The residue at position 339 (Ser339) is a Phosphoserine.

This sequence belongs to the ubiquitin-conjugating enzyme family.

It localises to the cytoplasm. The protein resides in the nucleus. It catalyses the reaction S-ubiquitinyl-[E1 ubiquitin-activating enzyme]-L-cysteine + [E2 ubiquitin-conjugating enzyme]-L-cysteine = [E1 ubiquitin-activating enzyme]-L-cysteine + S-ubiquitinyl-[E2 ubiquitin-conjugating enzyme]-L-cysteine.. It functions in the pathway protein modification; protein ubiquitination. Its function is as follows. Catalyzes the covalent attachment of ubiquitin to other proteins. Specific substrate for UBA6, not charged with ubiquitin by UBE1. May be involved in apoptosis regulation. This Rattus norvegicus (Rat) protein is Ubiquitin-conjugating enzyme E2 Z (Ube2z).